A 500-amino-acid polypeptide reads, in one-letter code: Probable malate:quinone oxidoreductase (500 aa).

It belongs to the MQO family. The cofactor is FAD.

The catalysed reaction is (S)-malate + a quinone = a quinol + oxaloacetate. It participates in carbohydrate metabolism; tricarboxylic acid cycle; oxaloacetate from (S)-malate (quinone route): step 1/1. In Halalkalibacterium halodurans (strain ATCC BAA-125 / DSM 18197 / FERM 7344 / JCM 9153 / C-125) (Bacillus halodurans), this protein is Probable malate:quinone oxidoreductase.